Consider the following 476-residue polypeptide: Probable coniferyl aldehyde dehydrogenase (476 aa).

Catalysis depends on residues glutamate 225 and cysteine 259.

It belongs to the aldehyde dehydrogenase family. As to quaternary structure, homodimer.

The enzyme catalyses (E)-coniferaldehyde + NADP(+) + H2O = (E)-ferulate + NADPH + 2 H(+). It catalyses the reaction (E)-coniferaldehyde + NAD(+) + H2O = (E)-ferulate + NADH + 2 H(+). The protein is Probable coniferyl aldehyde dehydrogenase (calB) of Pseudomonas aeruginosa (strain ATCC 15692 / DSM 22644 / CIP 104116 / JCM 14847 / LMG 12228 / 1C / PRS 101 / PAO1).